The primary structure comprises 239 residues: MATPHINAEMGDFADVVLMPGDPLRAKFIAETFLQDVREVNNVRGMLGFTGTYKGRKISVMGHGMGIPSCSIYAKELITDFGVKKIIRVGSCGAVRTDVKLRDVVIGMGACTDSKVNRMRFKDHDYAAIADFEMTRNAVDAAKAKGVNVRVGNLFSADLFYTPDPQMFDVMEKYGILGVEMEAAGICGVAAEFGAKALTICTVSDHIRTGEQTTAAERQTTFNDMIEIALESVLLGDNA.

H5 is a binding site for a purine D-ribonucleoside. Residues G21, R25, R44, and 88–91 (RVGS) each bind phosphate. A purine D-ribonucleoside is bound by residues 180-182 (EME) and 204-205 (SD). Catalysis depends on D205, which acts as the Proton donor.

It belongs to the PNP/UDP phosphorylase family. Homohexamer; trimer of homodimers.

It catalyses the reaction a purine D-ribonucleoside + phosphate = a purine nucleobase + alpha-D-ribose 1-phosphate. The enzyme catalyses a purine 2'-deoxy-D-ribonucleoside + phosphate = a purine nucleobase + 2-deoxy-alpha-D-ribose 1-phosphate. Functionally, catalyzes the reversible phosphorolytic breakdown of the N-glycosidic bond in the beta-(deoxy)ribonucleoside molecules, with the formation of the corresponding free purine bases and pentose-1-phosphate. The polypeptide is Purine nucleoside phosphorylase DeoD-type (Yersinia pestis bv. Antiqua (strain Antiqua)).